A 1005-amino-acid polypeptide reads, in one-letter code: Espin-like protein (1005 aa).

10 ANK repeats span residues 1–31, 35–64, 69–99, 103–132, 136–166, 170–200, 204–234, 238–267, 270–299, and 303–332; these read MEAQ…RPDI, LGAG…LPGN, NGAT…GLQD, SGVS…AATL, EGAL…GVNQ, SGAS…DVRL, DGMS…GLTA, EGAT…PIMR, WGGT…DPFL, and DGYT…PVRV. 2 disordered regions span residues 355–383 and 458–480; these read EERR…VPRE and ADHP…AAEQ. The segment covering 458 to 469 has biased composition (basic and acidic residues); sequence ADHPPEDQDQSQ. The stretch at 502 to 539 forms a coiled coil; sequence EDDLVYLEKQINDLQLRRRCQEYESELGRLAAQLQALL. Disordered regions lie at residues 611–643, 692–729, 764–794, and 951–975; these read LAQG…QREI, PRGD…GPGL, LEAQ…PRLG, and PHAS…SQGS.

Interacts with MYO3A (via C-terminus). Interacts with MYO3B (via C-terminus). As to expression, expressed in inner ear hair cells. Expressed in utricle hair bundles (at protein level). Expressed in choclea (at protein level).

The protein resides in the cell projection. It localises to the stereocilium. Functionally, binds to but does not cross-link actin. Required for the formation and maintenance of inner ear hair cell stereocilia and staircase formation. Essential for normal hearing. The protein is Espin-like protein (Espnl) of Mus musculus (Mouse).